Reading from the N-terminus, the 147-residue chain is AP-2 complex subunit sigma (147 aa).

It belongs to the adaptor complexes small subunit family. Adaptor protein complex 2 (AP-2) is a heterotetramer composed of two large adaptins (alpha-type subunit APL3 and beta-type subunit APL1), a medium chain (mu-type subunit APM4) and a small adaptin (sigma-type subunit APS2). Interacts with APL1.

The protein resides in the cell membrane. It is found in the membrane. Its subcellular location is the coated pit. Its function is as follows. Component of the adaptor complexes which link clathrin to receptors in coated vesicles. Clathrin-associated protein complexes are believed to interact with the cytoplasmic tails of membrane proteins, leading to their selection and concentration. The sequence is that of AP-2 complex subunit sigma (APS2) from Saccharomyces cerevisiae (strain ATCC 204508 / S288c) (Baker's yeast).